The sequence spans 307 residues: Plasmodesmata-located protein 2 (307 aa).

An N-terminal signal peptide occupies residues 1–23; sequence MGLSISFLSIIMMMCLLFPDLNV. Residues 24-275 lie on the Extracellular side of the membrane; it reads VVKSATTEYT…STSTGATGKT (252 aa). Gnk2-homologous domains lie at 33-136 and 141-240; these read TTLI…VSGF and GMEM…YYPN. Cystine bridges form between C40-C114, C90-C99, C102-C127, C149-C218, C194-C203, and C206-C231. Residues 246–268 are compositionally biased toward low complexity; the sequence is SSSSSSSSSSSSSGSSNSDPSTS. The disordered stretch occupies residues 246 to 270; sequence SSSSSSSSSSSSSGSSNSDPSTSTG. A helical transmembrane segment spans residues 276–296; the sequence is VAIIVGGAAGVGFLVICLLFA. The tract at residues 276 to 296 is necessary and sufficient for plasmodesmal targeting; that stretch reads VAIIVGGAAGVGFLVICLLFA. The Cytoplasmic segment spans residues 297-307; it reads KNLMRKKHDDY.

This sequence belongs to the cysteine-rich repeat secretory protein family. Plasmodesmata-located proteins (PDLD) subfamily. As to quaternary structure, (Microbial infection) Interacts with Grapevine fanleaf virus (GFLV) 2B-MP. Highly expressed in inflorescence shoot apex. Uniformly expressed within the inflorescence meristem with the exception of a boundary zone between floral primordia and the meristem where the expression is weaker (at protein level).

It localises to the cell membrane. Its subcellular location is the cell junction. It is found in the plasmodesma. Its function is as follows. Modulates cell-to-cell trafficking. This chain is Plasmodesmata-located protein 2, found in Arabidopsis thaliana (Mouse-ear cress).